The primary structure comprises 1072 residues: DNA-directed RNA polymerase subunit beta (1072 aa).

This sequence belongs to the RNA polymerase beta chain family. As to quaternary structure, in plastids the minimal PEP RNA polymerase catalytic core is composed of four subunits: alpha, beta, beta', and beta''. When a (nuclear-encoded) sigma factor is associated with the core the holoenzyme is formed, which can initiate transcription.

The protein localises to the plastid. Its subcellular location is the chloroplast. It carries out the reaction RNA(n) + a ribonucleoside 5'-triphosphate = RNA(n+1) + diphosphate. Its function is as follows. DNA-dependent RNA polymerase catalyzes the transcription of DNA into RNA using the four ribonucleoside triphosphates as substrates. This Amborella trichopoda protein is DNA-directed RNA polymerase subunit beta.